Consider the following 50-residue polypeptide: Sperm protamine P1 (50 aa).

The protein belongs to the protamine P1 family. Cross-linked by interchain disulfide bonds around the DNA-helix. As to expression, testis.

The protein resides in the nucleus. The protein localises to the chromosome. Protamines substitute for histones in the chromatin of sperm during the haploid phase of spermatogenesis. They compact sperm DNA into a highly condensed, stable and inactive complex. In Saimiri sciureus (Common squirrel monkey), this protein is Sperm protamine P1 (PRM1).